The chain runs to 123 residues: Large ribosomal subunit protein uL14c (123 aa).

It belongs to the universal ribosomal protein uL14 family. Part of the 50S ribosomal subunit.

The protein resides in the plastid. It localises to the chloroplast. Binds to 23S rRNA. This chain is Large ribosomal subunit protein uL14c, found in Triticum aestivum (Wheat).